The sequence spans 739 residues: Copalyl diphosphate synthase 1 (739 aa).

Lys154 contacts substrate. Asp287 and Asp289 together coordinate Mg(2+). Positions 287-290 (DADD) match the DXDD motif motif. Lys373 is a binding site for substrate.

The protein belongs to the terpene synthase family. Mg(2+) serves as cofactor.

It catalyses the reaction (2E,6E,10E)-geranylgeranyl diphosphate = (+)-copalyl diphosphate. The protein operates within secondary metabolite biosynthesis; terpenoid biosynthesis. Monofunctional diterpene synthase converting geranylgeranyl diphosphate to copalyl diphosphate. This Selaginella moellendorffii (Spikemoss) protein is Copalyl diphosphate synthase 1 (CPS1).